A 462-amino-acid chain; its full sequence is uncharacterized protein (462 aa).

The segment at 1 to 108 (MEDSNTNKDI…NGQDDQDEMD (108 aa)) is disordered. The span at 36-51 (TVERILERKQKERESK) shows a compositional bias: basic and acidic residues. Positions 64–95 (SSPSSLLSSPISSNDNNNNNNNNNNESFDINN) are enriched in low complexity. Positions 119-150 (LLKRKAALAAKKKESLAEQMKKYNQQYDSIIS) form a coiled coil. Residues 188–208 (SKLQSLNNNTSPSTSSSNLID) form a disordered region. Residues 190–208 (LQSLNNNTSPSTSSSNLID) show a composition bias toward low complexity.

This is an uncharacterized protein from Dictyostelium discoideum (Social amoeba).